A 427-amino-acid chain; its full sequence is Glutamate-1-semialdehyde 2,1-aminomutase (427 aa).

An N6-(pyridoxal phosphate)lysine modification is found at lysine 264.

Belongs to the class-III pyridoxal-phosphate-dependent aminotransferase family. HemL subfamily. Homodimer. The cofactor is pyridoxal 5'-phosphate.

The protein localises to the cytoplasm. It carries out the reaction (S)-4-amino-5-oxopentanoate = 5-aminolevulinate. It participates in porphyrin-containing compound metabolism; protoporphyrin-IX biosynthesis; 5-aminolevulinate from L-glutamyl-tRNA(Glu): step 2/2. This Campylobacter concisus (strain 13826) protein is Glutamate-1-semialdehyde 2,1-aminomutase.